We begin with the raw amino-acid sequence, 471 residues long: Trigger factor (471 aa).

Residues 162–243 (GDFVVMDLVA…VSQVQEQELP (82 aa)) form the PPIase FKBP-type domain. The segment at 436–471 (LRPDGTIGEPEDEIEAETEIEIEPAAETDTEADTEQ) is disordered. Residues 444-471 (EPEDEIEAETEIEIEPAAETDTEADTEQ) show a composition bias toward acidic residues.

Belongs to the FKBP-type PPIase family. Tig subfamily.

Its subcellular location is the cytoplasm. The enzyme catalyses [protein]-peptidylproline (omega=180) = [protein]-peptidylproline (omega=0). Functionally, involved in protein export. Acts as a chaperone by maintaining the newly synthesized protein in an open conformation. Functions as a peptidyl-prolyl cis-trans isomerase. The chain is Trigger factor from Nocardioides sp. (strain ATCC BAA-499 / JS614).